The following is an 85-amino-acid chain: Large ribosomal subunit protein bL27 (85 aa).

The disordered stretch occupies residues 1-22 (MAHKKAGGSTNNGRDSESKRLG).

The protein belongs to the bacterial ribosomal protein bL27 family.

The protein is Large ribosomal subunit protein bL27 of Photobacterium profundum (strain SS9).